We begin with the raw amino-acid sequence, 332 residues long: L-lactate dehydrogenase A chain (332 aa).

Residues 29–57 and R99 each bind NAD(+); that span reads GAVG…MEDK. Residues R106, N138, and R169 each coordinate substrate. N138 contributes to the NAD(+) binding site. H193 serves as the catalytic Proton acceptor. T248 contacts substrate.

The protein belongs to the LDH/MDH superfamily. LDH family. Homotetramer.

The protein resides in the cytoplasm. It carries out the reaction (S)-lactate + NAD(+) = pyruvate + NADH + H(+). It participates in fermentation; pyruvate fermentation to lactate; (S)-lactate from pyruvate: step 1/1. In terms of biological role, interconverts simultaneously and stereospecifically pyruvate and lactate with concomitant interconversion of NADH and NAD(+). This Sceloporus undulatus (Eastern fence lizard) protein is L-lactate dehydrogenase A chain (LDHA).